A 437-amino-acid polypeptide reads, in one-letter code: MGNNVVVLGTQWGDEGKGKVVDLLTDKAQWVVRYQGGHNAGHTLVIDGEKTVLHLIPSGILRDNVKCVIGNGVVLSPEALLEELKMLEDRGVPAKERLHISEGCPLILPYHIALDAARELARGDKAIGTTGRGIGPAYEDKVARRGLRVDDLFNMETFAVKLKEVIDYHNFQLVNYYKVEAVNFDEVLKQVQSVADLLISLVIDVTDELDKARLRGENILFEGAQGTLLDIDHGTYPYVTSSNTTAGGVATGSGFGPAHIDYVLGIVKAYTTRVGSGPFPTELYDGVDKLDPAGKHLGTVGHEFGATTGRLRRTGWFDAVAIKRAVQLNSITGFCLTKLDVLDGLEEIKICTAYKMPGDKLVDVPPMSAEGYEQAVPVYETVPGWTESSFGVTSFDALPKNAQAYVRRLEEITGIPMDIISTGPDRNETMIQVNPFN.

GTP is bound by residues 13-19 (GDEGKGK) and 41-43 (GHT). Residue D14 is the Proton acceptor of the active site. 2 residues coordinate Mg(2+): D14 and G41. IMP-binding positions include 14 to 17 (DEGK), 39 to 42 (NAGH), T130, R144, Q225, T240, and R310. The Proton donor role is filled by H42. A substrate-binding site is contributed by 306 to 312 (ATTGRLR). Residues R312, 338–340 (KLD), and 421–423 (STG) each bind GTP.

It belongs to the adenylosuccinate synthetase family. As to quaternary structure, homodimer. Requires Mg(2+) as cofactor.

It is found in the cytoplasm. It carries out the reaction IMP + L-aspartate + GTP = N(6)-(1,2-dicarboxyethyl)-AMP + GDP + phosphate + 2 H(+). It functions in the pathway purine metabolism; AMP biosynthesis via de novo pathway; AMP from IMP: step 1/2. In terms of biological role, plays an important role in the de novo pathway of purine nucleotide biosynthesis. Catalyzes the first committed step in the biosynthesis of AMP from IMP. The sequence is that of Adenylosuccinate synthetase from Psychromonas ingrahamii (strain DSM 17664 / CCUG 51855 / 37).